Reading from the N-terminus, the 149-residue chain is Envelope glycoprotein UL4 (149 aa).

A signal peptide spans Met-1–Cys-18. Residues Asn-46, Asn-51, Asn-59, Asn-67, Asn-105, Asn-109, Asn-119, Asn-136, and Asn-145 are each glycosylated (N-linked (GlcNAc...) asparagine; by host).

The protein belongs to the RL11 family. N-glycosylated and possibly O-glycosylated.

It is found in the virion membrane. The polypeptide is Envelope glycoprotein UL4 (UL4) (Human cytomegalovirus (strain Merlin) (HHV-5)).